Reading from the N-terminus, the 482-residue chain is Proline--tRNA ligase (482 aa).

It belongs to the class-II aminoacyl-tRNA synthetase family. ProS type 3 subfamily. Homodimer.

The protein resides in the cytoplasm. The catalysed reaction is tRNA(Pro) + L-proline + ATP = L-prolyl-tRNA(Pro) + AMP + diphosphate. Catalyzes the attachment of proline to tRNA(Pro) in a two-step reaction: proline is first activated by ATP to form Pro-AMP and then transferred to the acceptor end of tRNA(Pro). In Thermofilum pendens (strain DSM 2475 / Hrk 5), this protein is Proline--tRNA ligase.